The chain runs to 602 residues: Phosphoenolpyruvate carboxykinase [GTP] (602 aa).

Substrate contacts are provided by residues Arg-89 and 211-213 (YAG). Residues Lys-220 and His-239 each coordinate Mn(2+). Residue Ser-260 participates in substrate binding. Residue 261–266 (GSGKTS) coordinates GTP. Ser-262 is an active-site residue. Asp-277 is a binding site for Mn(2+). Residue 367–369 (NAR) coordinates substrate. GTP is bound by residues Arg-369 and Arg-400.

The protein belongs to the phosphoenolpyruvate carboxykinase [GTP] family. Mn(2+) serves as cofactor.

It is found in the cytoplasm. It catalyses the reaction oxaloacetate + GTP = phosphoenolpyruvate + GDP + CO2. It functions in the pathway carbohydrate biosynthesis; gluconeogenesis. Catalyzes the conversion of oxaloacetate (OAA) to phosphoenolpyruvate (PEP), the rate-limiting step in the metabolic pathway that produces glucose from lactate and other precursors derived from the citric acid cycle. This Sulfurisphaera tokodaii (strain DSM 16993 / JCM 10545 / NBRC 100140 / 7) (Sulfolobus tokodaii) protein is Phosphoenolpyruvate carboxykinase [GTP].